Reading from the N-terminus, the 481-residue chain is uncharacterized protein (481 aa).

11 helical membrane-spanning segments follow: residues 14-34 (LGFC…GIFL), 46-66 (FAPM…IVFA), 90-110 (IGIY…GVLA), 134-154 (FSVK…INLF), 167-187 (TVGK…IITT), 218-238 (FSSM…FESI), 258-278 (IAIF…MLLG), 303-323 (IIVV…SFGA), 377-397 (LAVI…IALA), 411-431 (AFTD…LAVS), and 446-466 (YFSI…AYLH).

This sequence belongs to the amino acid-polyamine-organocation (APC) superfamily.

The protein localises to the cell membrane. Its function is as follows. Probable amino-acid or metabolite transport protein. This is an uncharacterized protein from Mycobacterium tuberculosis (strain CDC 1551 / Oshkosh).